The following is a 283-amino-acid chain: Shikimate dehydrogenase (NADP(+)) (283 aa).

Shikimate is bound by residues 19-21 (SFS) and threonine 66. The active-site Proton acceptor is lysine 70. NADP(+) is bound at residue glutamate 82. Shikimate-binding residues include asparagine 91 and aspartate 106. NADP(+) contacts are provided by residues 129-133 (GAGGA) and isoleucine 225. Tyrosine 227 contributes to the shikimate binding site. An NADP(+)-binding site is contributed by glycine 248.

It belongs to the shikimate dehydrogenase family. Homodimer.

It catalyses the reaction shikimate + NADP(+) = 3-dehydroshikimate + NADPH + H(+). It functions in the pathway metabolic intermediate biosynthesis; chorismate biosynthesis; chorismate from D-erythrose 4-phosphate and phosphoenolpyruvate: step 4/7. In terms of biological role, involved in the biosynthesis of the chorismate, which leads to the biosynthesis of aromatic amino acids. Catalyzes the reversible NADPH linked reduction of 3-dehydroshikimate (DHSA) to yield shikimate (SA). The protein is Shikimate dehydrogenase (NADP(+)) of Methanosphaera stadtmanae (strain ATCC 43021 / DSM 3091 / JCM 11832 / MCB-3).